Reading from the N-terminus, the 162-residue chain is AP-1 complex subunit sigma-2 (162 aa).

Belongs to the adaptor complexes small subunit family. In terms of assembly, adaptor protein complex 1 (AP-1) is a heterotetramer composed of two large adaptins (gamma-type subunit and beta-type subunit), a medium adaptin (mu-type subunit) and a small adaptin (sigma-type subunit). As to expression, expressed in roots, stems, leaves, flowers and siliques (developing fruits and seeds).

The protein localises to the golgi apparatus. It localises to the cytoplasmic vesicle. Its subcellular location is the clathrin-coated vesicle membrane. Subunit of clathrin-associated adaptor protein complex 1 that plays a role in protein sorting at the trans-Golgi network and early endosomes (TGN/EE). The AP complexes mediate the recruitment of clathrin to membranes and the recognition of sorting signals within the cytosolic tails of transmembrane cargo molecules. This Arabidopsis thaliana (Mouse-ear cress) protein is AP-1 complex subunit sigma-2 (AAP19-2).